Reading from the N-terminus, the 491-residue chain is Lysine--tRNA ligase (491 aa).

Residues glutamate 400 and glutamate 407 each contribute to the Mg(2+) site.

Belongs to the class-II aminoacyl-tRNA synthetase family. As to quaternary structure, homodimer. Mg(2+) is required as a cofactor.

Its subcellular location is the cytoplasm. The catalysed reaction is tRNA(Lys) + L-lysine + ATP = L-lysyl-tRNA(Lys) + AMP + diphosphate. This is Lysine--tRNA ligase from Mesomycoplasma hyopneumoniae (strain 7448) (Mycoplasma hyopneumoniae).